The primary structure comprises 221 residues: RNA pyrophosphohydrolase (221 aa).

The region spanning 6-149 is the Nudix hydrolase domain; it reads GFRPNVGIVL…KRSVYALALT (144 aa). The short motif at 38-59 is the Nudix box element; sequence GGIDRGETPEQAMFRELHEEVG.

It belongs to the Nudix hydrolase family. RppH subfamily. It depends on a divalent metal cation as a cofactor.

Functionally, accelerates the degradation of transcripts by removing pyrophosphate from the 5'-end of triphosphorylated RNA, leading to a more labile monophosphorylated state that can stimulate subsequent ribonuclease cleavage. In Verminephrobacter eiseniae (strain EF01-2), this protein is RNA pyrophosphohydrolase.